The sequence spans 1250 residues: DNA topoisomerase 3-alpha (1250 aa).

The Toprim domain maps to 27–171 (KYLNVAEKND…NISVYRATFS (145 aa)). Residues 189 to 610 (DKRQSDAVDV…EQIAKYKQAY (422 aa)) enclose the Topo IA-type catalytic domain. The active-site O-(5'-phospho-DNA)-tyrosine intermediate is tyrosine 356. The span at 769-835 (RGGGGGPGPG…GTGGGGLGGG (67 aa)) shows a compositional bias: gly residues. Disordered regions lie at residues 769-899 (RGGG…GLDE) and 953-1035 (NGGT…TVLC). The span at 840–865 (PGGESKKSATKKPPNEPKPKKTKEPK) shows a compositional bias: basic and acidic residues. Low complexity predominate over residues 866–886 (AAPNKKTSSKSSGSIRSFFTS). The span at 956 to 965 (TMPTESNGDQ) shows a compositional bias: polar residues. Composition is skewed to basic and acidic residues over residues 966-994 (QLDKSLSEWIKEQDKADERPMLWGTRERA) and 1012-1021 (PRWDSVERDS). The segment covering 1022 to 1033 (TPPSSVPESETV) has biased composition (low complexity). Zn(2+) is bound by residues cysteine 1035, cysteine 1038, cysteine 1061, and cysteine 1067. The GRF-type 1 zinc finger occupies 1035–1076 (CTGCQQPARQNTVRKNGPNLGRLYYKCPKPDECNFFQWADEP). The disordered stretch occupies residues 1069–1150 (FFQWADEPPS…TATPGDGEEV (82 aa)). Residues 1079 to 1101 (SAKSKNSTGSAPQSTTSWGSNRV) show a composition bias toward polar residues. Residues 1106 to 1134 (SIQQSNSQRGQSSMRSNSSSTVTITQTKT) are compositionally biased toward low complexity. Zn(2+) is bound by residues cysteine 1152, cysteine 1154, cysteine 1177, and cysteine 1184. The segment at 1152-1193 (CNCGQLASQLTVRKDGPNQGRPFYACPTREKSCGFFKWGDED) adopts a GRF-type 2 zinc-finger fold. Residues 1188-1231 (KWGDEDQNQGASSTSWGSANRNPPGRSQPTAITSDGPKTRRCGL) form a disordered region. Residues 1195 to 1220 (NQGASSTSWGSANRNPPGRSQPTAIT) show a composition bias toward polar residues.

The protein belongs to the type IA topoisomerase family.

The catalysed reaction is ATP-independent breakage of single-stranded DNA, followed by passage and rejoining.. In terms of biological role, releases the supercoiling and torsional tension of DNA introduced during the DNA replication and transcription by transiently cleaving and rejoining one strand of the DNA duplex. Introduces a single-strand break via transesterification at a target site in duplex DNA. The scissile phosphodiester is attacked by the catalytic tyrosine of the enzyme, resulting in the formation of a DNA-(5'-phosphotyrosyl)-enzyme intermediate and the expulsion of a 3'-OH DNA strand. The free DNA strand than undergoes passage around the unbroken strand thus removing DNA supercoils. Finally, in the religation step, the DNA 3'-OH attacks the covalent intermediate to expel the active-site tyrosine and restore the DNA phosphodiester backbone. Weakly relaxes negative supercoils and displays a distinct preference for binding single-stranded DNA. The polypeptide is DNA topoisomerase 3-alpha (Top3alpha) (Drosophila melanogaster (Fruit fly)).